Reading from the N-terminus, the 722-residue chain is Zinc finger BED domain-containing protein RICESLEEPER 2 (722 aa).

Residues 66 to 134 form a BED-type zinc finger; the sequence is RKKSLVWEHF…QEHKLALTPA (69 aa). Zn(2+) contacts are provided by C89, C92, H113, and H127. The disordered stretch occupies residues 572-592; it reads VEQGDGNNAPASENGTQATAP. Over residues 576-592 the composition is skewed to polar residues; the sequence is DGNNAPASENGTQATAP. The segment at 617–702 is HATC (Hobo-Ac-Tam3) domain; sequence ELEQYLDESL…EALVCAKDWL (86 aa).

Homodimer.

It is found in the nucleus. Transposase-like protein that is essential for plant growth and development. May regulate global gene expression by recruiting other cellular factors. This is Zinc finger BED domain-containing protein RICESLEEPER 2 from Oryza sativa subsp. japonica (Rice).